The chain runs to 191 residues: MESIILSIAIFIGVLLGTSVGTFSGSGISAGVGASSGSGISAGVGASSGSSTSVGVGTFGGSSTSVGVGTFGGSSTSVGVGTFSGSRTSPDVDAGSGSSTSPDVGAGSGSSISAGVGTFSGSRTSPDVDAGSGSSTSPDVGAGSGSSISAGVGSRIGTGISTTMNARVAVLITAAILSAPVTAIALLEARR.

A signal peptide spans 1-17 (MESIILSIAIFIGVLLG). The tract at residues 82–148 (TFSGSRTSPD…DVGAGSGSSI (67 aa)) is disordered. A helical membrane pass occupies residues 168–188 (VAVLITAAILSAPVTAIALLE).

It localises to the membrane. This is an uncharacterized protein from Saccharomyces cerevisiae (strain ATCC 204508 / S288c) (Baker's yeast).